A 137-amino-acid polypeptide reads, in one-letter code: Global transcriptional regulator Spx (137 aa).

Cysteines 10 and 13 form a disulfide.

It belongs to the ArsC family. Spx subfamily. Interacts with the C-terminal domain of the alpha subunit of the RNAP.

It is found in the cytoplasm. Global transcriptional regulator that plays a key role in stress response and exerts either positive or negative regulation of genes. Acts by interacting with the C-terminal domain of the alpha subunit of the RNA polymerase (RNAP). This interaction can enhance binding of RNAP to the promoter region of target genes and stimulate their transcription, or block interaction of RNAP with activator. This is Global transcriptional regulator Spx from Streptococcus mutans serotype c (strain ATCC 700610 / UA159).